Consider the following 109-residue polypeptide: Flagellar hook-basal body complex protein FliE (109 aa).

The disordered stretch occupies residues 1 to 38 (MQAIHNDKSLLSPFSELNTDNRTQREESGSTFKEQKGG). Over residues 22–38 (RTQREESGSTFKEQKGG) the composition is skewed to basic and acidic residues.

This sequence belongs to the FliE family.

It localises to the bacterial flagellum basal body. This chain is Flagellar hook-basal body complex protein FliE, found in Helicobacter acinonychis (strain Sheeba).